Consider the following 380-residue polypeptide: Putative ankyrin repeat protein RF_1306 (380 aa).

ANK repeat units lie at residues 48 to 76, 80 to 109, 112 to 143, 170 to 199, 203 to 233, 239 to 268, 270 to 299, 303 to 333, and 337 to 366; these read NKWS…NINA, KCRT…KIAP, YGWS…KYDK, NNKT…KFDI, LGYK…GKNT, LEKV…GFDK, LGQK…DAQY, LGRS…DINY, and SGLN…YESY.

The chain is Putative ankyrin repeat protein RF_1306 from Rickettsia felis (strain ATCC VR-1525 / URRWXCal2) (Rickettsia azadi).